Reading from the N-terminus, the 100-residue chain is Replication restart protein PriB (100 aa).

The SSB domain maps to 1–99; it reads MGFNNLVSLA…LRIQNIQEYK (99 aa).

It belongs to the PriB family. In terms of assembly, homodimer. Interacts with PriA and DnaT. Component of the replication restart primosome. Primosome assembly occurs via a 'hand-off' mechanism. PriA binds to replication forks, subsequently PriB then DnaT bind; DnaT then displaces ssDNA to generate the helicase loading substrate.

Functionally, involved in the restart of stalled replication forks, which reloads the replicative helicase on sites other than the origin of replication; the PriA-PriB pathway is the major replication restart pathway. During primosome assembly it facilitates complex formation between PriA and DnaT on DNA; stabilizes PriA on DNA. Stimulates the DNA unwinding activity of PriA helicase. This is Replication restart protein PriB from Neisseria meningitidis serogroup B (strain ATCC BAA-335 / MC58).